We begin with the raw amino-acid sequence, 176 residues long: Ribosome maturation factor RimM (176 aa).

In terms of domain architecture, PRC barrel spans 97 to 176 (EDEFYWRDLI…QILVDWDPDF (80 aa)).

This sequence belongs to the RimM family. As to quaternary structure, binds ribosomal protein uS19.

It localises to the cytoplasm. Functionally, an accessory protein needed during the final step in the assembly of 30S ribosomal subunit, possibly for assembly of the head region. Essential for efficient processing of 16S rRNA. May be needed both before and after RbfA during the maturation of 16S rRNA. It has affinity for free ribosomal 30S subunits but not for 70S ribosomes. This is Ribosome maturation factor RimM from Shewanella sp. (strain MR-4).